The primary structure comprises 204 residues: Tat proofreading chaperone DmsD (204 aa).

It belongs to the TorD/DmsD family. DmsD subfamily.

Its function is as follows. Required for biogenesis/assembly of DMSO reductase, but not for the interaction of the DmsA signal peptide with the Tat system. May be part of a chaperone cascade complex that facilitates a folding-maturation pathway for the substrate protein. The sequence is that of Tat proofreading chaperone DmsD from Salmonella paratyphi A (strain ATCC 9150 / SARB42).